A 395-amino-acid polypeptide reads, in one-letter code: Putative 8-amino-7-oxononanoate synthase (395 aa).

Substrate is bound at residue Arg-22. 109 to 110 (GY) serves as a coordination point for pyridoxal 5'-phosphate. His-139 serves as a coordination point for substrate. Pyridoxal 5'-phosphate-binding positions include Ser-187, 212–215 (DEAH), and 241–244 (TFSK). Residue Lys-244 is modified to N6-(pyridoxal phosphate)lysine. Thr-358 is a binding site for substrate.

It belongs to the class-II pyridoxal-phosphate-dependent aminotransferase family. BioF subfamily. Homodimer. Pyridoxal 5'-phosphate is required as a cofactor.

The enzyme catalyses 6-carboxyhexanoyl-[ACP] + L-alanine + H(+) = (8S)-8-amino-7-oxononanoate + holo-[ACP] + CO2. It functions in the pathway cofactor biosynthesis; biotin biosynthesis. Catalyzes the decarboxylative condensation of pimeloyl-[acyl-carrier protein] and L-alanine to produce 8-amino-7-oxononanoate (AON), [acyl-carrier protein], and carbon dioxide. The sequence is that of Putative 8-amino-7-oxononanoate synthase (bioF) from Magnetococcus marinus (strain ATCC BAA-1437 / JCM 17883 / MC-1).